Reading from the N-terminus, the 195-residue chain is Type II secretion system protein J (195 aa).

A propeptide spans 1 to 7 (leader sequence); it reads MINRQQG. Phe8 is modified (N-methylphenylalanine). A helical transmembrane segment spans residues 8 to 29; sequence FTLLEVMAALAIFSMLSVLAFM.

It belongs to the GSP J family. As to quaternary structure, type II secretion is composed of four main components: the outer membrane complex, the inner membrane complex, the cytoplasmic secretion ATPase and the periplasm-spanning pseudopilus. Interacts with core component GspG. Cleaved by prepilin peptidase. Post-translationally, methylated by prepilin peptidase at the amino group of the N-terminal phenylalanine once the leader sequence is cleaved by prepilin peptidase.

It is found in the cell inner membrane. Component of the type II secretion system required for the energy-dependent secretion of extracellular factors such as proteases and toxins from the periplasm. Part of the pseudopilus tip complex that is critical for the recognition and binding of secretion substrates. In Escherichia coli (strain K12), this protein is Type II secretion system protein J (gspJ).